A 199-amino-acid polypeptide reads, in one-letter code: MVLVKICGLMHSEDILAVNTAGADFAGFVFAPGRHQISLEQALSLKQLLHPKIKTVGVFVNEPVAEILAIYQAGAIDVAQLHGKSTPAEITQLQQAGLKVIQVFERQAIDLTSMADYLMVDSGKGSGQLLNLKAIPHISRPLILAGGLTPLNVRQAVQLVQPTMVDVSSGVETNGHKDADKITQFIQQAKEDIIYEDIK.

Belongs to the TrpF family.

The catalysed reaction is N-(5-phospho-beta-D-ribosyl)anthranilate = 1-(2-carboxyphenylamino)-1-deoxy-D-ribulose 5-phosphate. Its pathway is amino-acid biosynthesis; L-tryptophan biosynthesis; L-tryptophan from chorismate: step 3/5. The polypeptide is N-(5'-phosphoribosyl)anthranilate isomerase (Lacticaseibacillus casei (strain BL23) (Lactobacillus casei)).